The sequence spans 199 residues: Guanylate kinase (199 aa).

One can recognise a Guanylate kinase-like domain in the interval 19–198 (VTVAVVSGPT…AVAHLVELLS (180 aa)). 26–33 (GPTAVGKG) is a binding site for ATP.

It belongs to the guanylate kinase family.

It is found in the cytoplasm. The catalysed reaction is GMP + ATP = GDP + ADP. Its function is as follows. Essential for recycling GMP and indirectly, cGMP. The polypeptide is Guanylate kinase (Cutibacterium acnes (strain DSM 16379 / KPA171202) (Propionibacterium acnes)).